The sequence spans 163 residues: Norbelladine synthase (163 aa).

A tyramine-binding site is contributed by tyrosine 68–glutamate 71. Catalysis depends on lysine 83, which acts as the Proton donor.

This sequence belongs to the BetVI family. Mostly expressed in bulbs, and, to a lower extent, in roots, stems, leaves and flowers.

The catalysed reaction is 3,4-dihydroxybenzaldehyde + tyramine + AH2 = norbelladine + A + H2O. It functions in the pathway alkaloid biosynthesis. Catalyzes the condensation of tyramine and 3,4-dihydroxybenzaldehyde (3,4-DHBA) to form norbelladine, the common precursor to all Amaryllidaceae alkaloids such as galanthamine, lycorine and haemanthamine, and including haemanthamine- and crinamine-type alkaloids, promising anticancer agents. The sequence is that of Norbelladine synthase from Narcissus pseudonarcissus (Daffodil).